Here is a 332-residue protein sequence, read N- to C-terminus: Putative potassium channel regulatory protein sup-10 (332 aa).

Residues 1-18 (MRYAVFIFLIVLIDLIYC) form the signal peptide. Residues 19–301 (WNSKRSFFIP…EISERNKRPA (283 aa)) are Extracellular-facing. 3 N-linked (GlcNAc...) asparagine glycosylation sites follow: N61, N107, and N166. Residues 302 to 322 (FVLVGLTGGIAVIILAFSIFW) form a helical membrane-spanning segment. Over 323-332 (GLNGSGFNKD) the chain is Cytoplasmic.

May form a complex with sup-9 and unc-93 where sup-10 and unc-93 act as regulatory subunits of the two pore potassium channel sup-9. Sup-10 may regulate sup-9 via sup-18. In terms of tissue distribution, low levels in body-wall muscles, eight vulval muscles, intestinal muscles and anal depressor muscle.

The protein resides in the membrane. May contribute to coordination of muscle contraction as regulatory subunit of a nonessential potassium channel complex. The polypeptide is Putative potassium channel regulatory protein sup-10 (Caenorhabditis elegans).